Consider the following 152-residue polypeptide: Superoxide dismutase [Cu-Zn] 4AP (152 aa).

The Cu cation site is built by H45, H47, and H62. C56 and C145 form a disulfide bridge. The Zn(2+) site is built by H62, H70, H79, and D82. Cu cation is bound at residue H119.

It belongs to the Cu-Zn superoxide dismutase family. In terms of assembly, homodimer. Requires Cu cation as cofactor. It depends on Zn(2+) as a cofactor.

It localises to the cytoplasm. It catalyses the reaction 2 superoxide + 2 H(+) = H2O2 + O2. Destroys radicals which are normally produced within the cells and which are toxic to biological systems. The chain is Superoxide dismutase [Cu-Zn] 4AP (SODCC.2) from Zea mays (Maize).